An 870-amino-acid chain; its full sequence is Dynamin-2 (870 aa).

Positions 28–294 (HLDLPQIAVV…LTNHIRESLP (267 aa)) constitute a Dynamin-type G domain. The segment at 38–45 (GGQSAGKS) is G1 motif. Residues Ser-41, Gly-43, Lys-44, Ser-45, Ser-46, Arg-59, and Gly-60 each coordinate GDP. The segment at 64–66 (VTR) is G2 motif. A G3 motif region spans residues 136–139 (DLPG). A G4 motif region spans residues 205-208 (TKLD). 3 residues coordinate GDP: Lys-206, Asp-208, and Asp-211. Tyr-231 is subject to Phosphotyrosine; by SRC. Positions 235–238 (VNRS) are G5 motif. GDP contacts are provided by Asn-236, Arg-237, and Gln-239. Lys-299 is subject to N6-acetyllysine. The PH domain maps to 519-625 (LVIRRGWLTI…WKASFLRAGV (107 aa)). Tyr-597 is subject to Phosphotyrosine; by SRC. N6-acetyllysine is present on Lys-598. A GED domain is found at 653 to 744 (VETIRNLVDS…IIGDISTSTV (92 aa)). The interval 741-870 (TSTVSTPVPP…IRPAEPSLLD (130 aa)) is disordered. Thr-755 is subject to Phosphothreonine. Polar residues predominate over residues 756 to 767 (WLQSASSHSPTP). At Ser-764 the chain carries Phosphoserine; by CDK1. Residues 796 to 806 (VPVGAAASFSA) are compositionally biased toward low complexity. The span at 826–855 (PAPPQIPSRPVRIPPGIPPGVPSRRPPAAP) shows a compositional bias: pro residues. A Phosphoserine; by GSK3-alpha modification is found at Ser-848.

It belongs to the TRAFAC class dynamin-like GTPase superfamily. Dynamin/Fzo/YdjA family. As to quaternary structure, oligomerizes into a helical polymer that self-assembles around the vesicle membrane, when associated to the menbrane through lipid binding. Interacts with SHANK1 and SHANK2. Interacts with SNX9. Interacts (via C-terminal proline-rich domain (PRD)) with SNX18 (via SH3 domain); this interaction regulates ATG9A and ATG16L1 trafficking from recycling endosomes to sites of autophagosome formation. Interacts with SNX33 (via SH3 domain). Interacts with MYO1E (via SH3 domain). Interacts with PSTPIP1 (via SH3 domain). Interacts with CTNND2. Interacts (via C-terminal proline-rich domain (PRD)) with BIN1 (via SH3 domain); this interaction allows the recruitment of DNM2 to the membrane tubules and inhibits self-assembly-stimulated GTPase activity on the membrane. Interacts with GABARAP, GABARAPL1 and GABARAPL2. Interacts with MAP1LC3B (the lipidate and non-lipidated LC3 form); this interaction mediates recycling endosome scission leading to autophagosome release. Interacts with ITSN1. Interacts (via C-terminal proline-rich domain (PRD)) with SH3BP4 (via SH3 domain); this interaction controls the GTPase activity and is prevented by EGFR-induced tyrosine phosphorylation of either DNM2 or SH3BP4. May interact with PIK3C3. May be a component of a complex composed of RAB5A (in GDP-bound form), DYN2 and PIK3C3. Interacts with SDC4; this interaction is markedly enhanced at focal ahesion site upon induction of focal adhesions and stress-fiber formation. Interacts with ACTN1. Interacts with CTTN; this interaction stimulates the intrinsic GTPase activity of DNM2 and stabilizes the association of DNM2 and actin filaments; in addition this interaction is stimulated by ligand binding to the receptor, leading to the recruitment of the DNM2-CTTN complex to the sequestered receptor-ligand complex to its internalization. Interacts with NOSTRIN (via SH3 domain); this interaction allows the recruitment of NOS3 to dynamin-positive structures. Interacts with TUBG1; this interaction may participate in centrosome cohesion. In terms of processing, phosphorylation at Ser-848 by GSK3-alpha relieves the inhibition of BIN1 and promotes endocytosis. Phosphorylation at Ser-764 by CDK1 is greatly increased upon mitotic entry. It regulates cytokinesis downstream of calcineurin, and does not affect clathrin-mediated endocytosis. Dephosphorylated by calcineurin/PP2 during cytokinesis in a Ca(2+)- and calmodulin-dependent manner. Phosphorylated on tyrosine residues by EGFR and after activation of SRC. As to expression, widely expressed. Expressed in skeletal muscle and the peripheral nerve.

It localises to the cytoplasm. It is found in the cytoskeleton. The protein resides in the cytoplasmic vesicle. The protein localises to the clathrin-coated vesicle. Its subcellular location is the cell projection. It localises to the uropodium. It is found in the endosome. The protein resides in the microtubule organizing center. The protein localises to the centrosome. Its subcellular location is the centriole. It localises to the recycling endosome. It is found in the phagocytic cup. The protein resides in the phagosome membrane. The protein localises to the podosome. Its subcellular location is the cell junction. It localises to the postsynaptic density. It is found in the synapse. The protein resides in the synaptosome. The protein localises to the midbody. Its subcellular location is the membrane. It localises to the clathrin-coated pit. The catalysed reaction is GTP + H2O = GDP + phosphate + H(+). Catalyzes the hydrolysis of GTP and utilizes this energy to mediate vesicle scission at plasma membrane during endocytosis and filament remodeling at many actin structures during organization of the actin cytoskeleton. Plays an important role in vesicular trafficking processes, namely clathrin-mediated endocytosis (CME), exocytic and clathrin-coated vesicle from the trans-Golgi network, and PDGF stimulated macropinocytosis. During vesicular trafficking process, associates to the membrane, through lipid binding, and self-assembles into ring-like structure through oligomerization to form a helical polymer around the vesicle membrane and leading to vesicle scission. Plays a role in organization of the actin cytoskeleton by mediating arrangement of stress fibers and actin bundles in podocytes. During organization of the actin cytoskeleton, self-assembles into ring-like structure that directly bundles actin filaments to form typical membrane tubules decorated with dynamin spiral polymers. Self-assembly increases GTPase activity and the GTP hydrolysis causes the rapid depolymerization of dynamin spiral polymers, and results in dispersion of actin bundles. Remodels, through its interaction with CTTN, bundled actin filaments in a GTPase-dependent manner and plays a role in orchestrating the global actomyosin cytoskeleton. The interaction with CTTN stabilizes the interaction of DNM2 and actin filaments and stimulates the intrinsic GTPase activity that results in actin filament-barbed ends and increases the sensitivity of filaments in bundles to the actin depolymerizing factor, CFL1. Plays a role in the autophagy process, by participating in the formation of ATG9A vesicles destined for the autophagosomes through its interaction with SNX18, by mediating recycling endosome scission leading to autophagosome release through MAP1LC3B interaction. Also regulates maturation of apoptotic cell corpse-containing phagosomes by recruiting PIK3C3 to the phagosome membrane. Also plays a role in cytokinesis. May participate in centrosome cohesion through its interaction with TUBG1. Plays a role in the regulation of neuron morphology, axon growth and formation of neuronal growth cones. Involved in membrane tubulation. This Homo sapiens (Human) protein is Dynamin-2.